A 251-amino-acid polypeptide reads, in one-letter code: MRTGVIAKKVGMTRLFQEDGRHVPVTVLSLENCQVVSVRTAERDGYVALQLGAGEAKQKNVAKPQREHFAKAEVPLKMEVAEFRVADDALLDVGSTIAASHFVPGQYVDITGQTQGKGFQGAMKRWGFGGMRATHGVSISHRAHGSTGNRQDPGRVFKNKKMAGHMGDRQRTQQNLEVVRTDDERGLIFVKGSVPGSKNAWLLVRDAVKVSRHAEAPYPAGLKQAANSNDSAAADTPAEVAAVEATEGQEG.

N5-methylglutamine is present on Gln-151. Positions 221–251 are disordered; sequence GLKQAANSNDSAAADTPAEVAAVEATEGQEG. Residues 225–251 show a composition bias toward low complexity; it reads AANSNDSAAADTPAEVAAVEATEGQEG.

Belongs to the universal ribosomal protein uL3 family. Part of the 50S ribosomal subunit. Forms a cluster with proteins L14 and L19. Methylated by PrmB.

One of the primary rRNA binding proteins, it binds directly near the 3'-end of the 23S rRNA, where it nucleates assembly of the 50S subunit. The polypeptide is Large ribosomal subunit protein uL3 (Novosphingobium aromaticivorans (strain ATCC 700278 / DSM 12444 / CCUG 56034 / CIP 105152 / NBRC 16084 / F199)).